The primary structure comprises 257 residues: Urease accessory protein UreD (257 aa).

This sequence belongs to the UreD family. In terms of assembly, ureD, UreF and UreG form a complex that acts as a GTP-hydrolysis-dependent molecular chaperone, activating the urease apoprotein by helping to assemble the nickel containing metallocenter of UreC. The UreE protein probably delivers the nickel.

Its subcellular location is the cytoplasm. Required for maturation of urease via the functional incorporation of the urease nickel metallocenter. The sequence is that of Urease accessory protein UreD from Ruegeria pomeroyi (strain ATCC 700808 / DSM 15171 / DSS-3) (Silicibacter pomeroyi).